Reading from the N-terminus, the 484-residue chain is Mitogen-activated protein kinase SLT2/MPK1 (484 aa).

The Protein kinase domain maps to 23–318 (FQLIKEIGHG…VDEALEHPYL (296 aa)). Residues 29–37 (IGHGAYGIV) and Lys54 contribute to the ATP site. Asp153 serves as the catalytic Proton acceptor. The residue at position 190 (Thr190) is a Phosphothreonine. Positions 190 to 192 (TEY) match the TXY motif. Position 192 is a phosphotyrosine (Tyr192). Residues 383–392 (QQQQQQQQQP) are compositionally biased toward low complexity. 2 disordered regions span residues 383–403 (QQQQ…AAAS) and 426–464 (IHSQ…PQND).

Belongs to the protein kinase superfamily. CMGC Ser/Thr protein kinase family. MAP kinase subfamily. In terms of assembly, interacts with RLM1. Mg(2+) is required as a cofactor. Dually phosphorylated on Thr-190 and Tyr-192, which activates the enzyme.

The enzyme catalyses L-seryl-[protein] + ATP = O-phospho-L-seryl-[protein] + ADP + H(+). It carries out the reaction L-threonyl-[protein] + ATP = O-phospho-L-threonyl-[protein] + ADP + H(+). With respect to regulation, activated by tyrosine and threonine phosphorylation by MKK1 and MKK2. Its function is as follows. Serine/threonine protein kinase involved in a signal transduction pathway that plays a role in yeast cell morphogenesis and cell growth. This pathway seems to start by SMP3; then involve the kinase PKC1 that may act the BCK1 kinase that then phosphorylates MKK1 and MKK2 which themselves phosphorylate the SLT2/MPK1 kinase which itself then phosphorylates and activates the transcription factor RLM1. Directly phosphorylates BCY1 upon TOR complex 1 (TORC1) inhibition. This chain is Mitogen-activated protein kinase SLT2/MPK1 (SLT2), found in Saccharomyces cerevisiae (strain ATCC 204508 / S288c) (Baker's yeast).